The sequence spans 1839 residues: DNA-directed RNA polymerase II subunit RPB1 (1839 aa).

Zn(2+) is bound by residues cysteine 66, cysteine 69, cysteine 76, histidine 79, cysteine 106, cysteine 109, and cysteine 147. The segment at aspartate 152–alanine 174 is disordered. Positions valine 156 to lysine 166 are enriched in basic and acidic residues. A Zn(2+)-binding site is contributed by cysteine 172. A DNA-binding region spans residues threonine 326–glutamate 397. Mg(2+) is bound by residues aspartate 495, aspartate 497, and aspartate 499. The alpha-amanitin binding stretch occupies residues glycine 785–proline 795. Residues proline 829–glutamate 841 are bridging helix. Over residues proline 1538–tyrosine 1726 the composition is skewed to low complexity. The interval proline 1538–proline 1839 is disordered. 27 repeat units span residues tyrosine 1544–glycine 1550, tyrosine 1551–glycine 1557, tyrosine 1558–glycine 1564, tyrosine 1565–glycine 1571, tyrosine 1572–threonine 1578, tyrosine 1579–glycine 1585, tyrosine 1586–alanine 1592, tyrosine 1593–serine 1599, tyrosine 1600–serine 1606, tyrosine 1607–serine 1613, tyrosine 1614–serine 1620, tyrosine 1621–serine 1627, tyrosine 1628–serine 1634, tyrosine 1635–alanine 1641, tyrosine 1642–alanine 1648, tyrosine 1649–alanine 1655, tyrosine 1656–serine 1662, tyrosine 1663–serine 1669, tyrosine 1670–serine 1676, tyrosine 1677–serine 1683, tyrosine 1684–serine 1690, tyrosine 1691–alanine 1697, tyrosine 1698–glycine 1704, tyrosine 1705–serine 1711, tyrosine 1712–serine 1718, tyrosine 1719–serine 1725, and tyrosine 1726–lysine 1732. A C-terminal domain (CTD); 37 X 7 AA tandem approximate repeats of Y-[GNS]-P-[QST]-[LNS]-[APT]-[AGKNRSTY] region spans residues tyrosine 1544–glycine 1813. Residues asparagine 1727–arginine 1745 show a composition bias toward polar residues. The stretch at tyrosine 1733–alanine 1738 is one 28; approximate repeat. A run of 6 repeats spans residues tyrosine 1739–arginine 1745, tyrosine 1752–asparagine 1758, tyrosine 1759–serine 1765, tyrosine 1766–serine 1772, tyrosine 1773–threonine 1779, and tyrosine 1780–tyrosine 1786. Positions serine 1747 to alanine 1798 are enriched in low complexity. One copy of the 35; approximate repeat lies at tyrosine 1794–glycine 1799. 2 tandem repeats follow at residues tyrosine 1800–glycine 1806 and tyrosine 1807–glycine 1813. Positions histidine 1818 to proline 1839 are enriched in basic and acidic residues.

Belongs to the RNA polymerase beta' chain family. As to quaternary structure, component of the RNA polymerase II (Pol II) complex consisting of at least 12 subunits. Interacts with RDM1. Interacts (via CTD) with PRP40A, PRP40B, PRP40C and CYP59. Interacts with MEE12/CCG1 and MEE14/CBP1. Binds (via CTD) to ATX1, especially when phosphorylated on 'Ser-5' of the heptapeptide repeat. Post-translationally, the tandem 7 residues repeats in the C-terminal domain (CTD) can be highly phosphorylated. The phosphorylation activates Pol II. Phosphorylation occurs mainly at residues 'Ser-2' and 'Ser-5' of the heptapeptide repeat. The phosphorylation state is believed to result from the balanced action of site-specific CTD kinases and phosphatase, and a 'CTD code' that specifies the position of Pol II within the transcription cycle has been proposed. ATX1 seems to regulate phosphorylation statment. 'Ser-2' and 'Ser-5' phosphorylation are repressed by flavopiridol (Flap) and seliciclib (Selic), inhibitors of CDK7 and CDK9.

It is found in the nucleus. The enzyme catalyses RNA(n) + a ribonucleoside 5'-triphosphate = RNA(n+1) + diphosphate. Its function is as follows. DNA-dependent RNA polymerase catalyzes the transcription of DNA into RNA using the four ribonucleoside triphosphates as substrates. Largest and catalytic component of RNA polymerase II which synthesizes mRNA precursors and many functional non-coding RNAs. Forms the polymerase active center together with the second largest subunit. Pol II is the central component of the basal RNA polymerase II transcription machinery. It is composed of mobile elements that move relative to each other. NRPB1 is part of the core element with the central large cleft, the clamp element that moves to open and close the cleft and the jaws that are thought to grab the incoming DNA template. At the start of transcription, a single-stranded DNA template strand of the promoter is positioned within the central active site cleft of Pol II. A bridging helix emanates from NRPB1 and crosses the cleft near the catalytic site and is thought to promote translocation of Pol II by acting as a ratchet that moves the RNA-DNA hybrid through the active site by switching from straight to bent conformations at each step of nucleotide addition. During transcription elongation, Pol II moves on the template as the transcript elongates. Elongation is influenced by the phosphorylation status of the C-terminal domain (CTD) of Pol II largest subunit (NRPB1), which serves as a platform for assembly of factors that regulate transcription initiation, elongation, termination and mRNA processing. The chain is DNA-directed RNA polymerase II subunit RPB1 from Arabidopsis thaliana (Mouse-ear cress).